The following is a 510-amino-acid chain: Flagellin A (510 aa).

This sequence belongs to the bacterial flagellin family. As to quaternary structure, heteromer of FlaA and FlaB. FlaB is located proximal to the hook while the remainder of the filament is composed of the predominant FlaA.

The protein resides in the secreted. It localises to the bacterial flagellum. Its function is as follows. Flagellin is the subunit protein which polymerizes to form the filaments of bacterial flagella. Important for motility and virulence. The chain is Flagellin A (flaA) from Helicobacter pylori (strain ATCC 700392 / 26695) (Campylobacter pylori).